The primary structure comprises 257 residues: Probable 6-phosphogluconolactonase (257 aa).

It belongs to the glucosamine/galactosamine-6-phosphate isomerase family. 6-phosphogluconolactonase subfamily.

It catalyses the reaction 6-phospho-D-glucono-1,5-lactone + H2O = 6-phospho-D-gluconate + H(+). It functions in the pathway carbohydrate degradation; pentose phosphate pathway; D-ribulose 5-phosphate from D-glucose 6-phosphate (oxidative stage): step 2/3. Hydrolysis of 6-phosphogluconolactone to 6-phosphogluconate. This Schizosaccharomyces pombe (strain 972 / ATCC 24843) (Fission yeast) protein is Probable 6-phosphogluconolactonase.